A 1482-amino-acid polypeptide reads, in one-letter code: Cystic fibrosis transmembrane conductance regulator (1482 aa).

At 1–77 (MQRSPLEKAS…KLINALQRCF (77 aa)) the chain is on the cytoplasmic side. Residues 78 to 98 (FWRFTFYGILLYLGEVTKAIQ) form a helical membrane-spanning segment. Residues 81–365 (FTFYGILLYL…WAVQTWYDSL (285 aa)) form the ABC transmembrane type-1 1 domain. Residues 99–122 (PLLLGRIIASYDPDNKMERSIAIY) lie on the Extracellular side of the membrane. A helical transmembrane segment spans residues 123-146 (LGIGLCLLFIMRTLLLHPAIFGLH). Residues 147–195 (HIGMQMRIALFSLIYKKTLKLSSRVLDKISIGQLVSLLSNNLNKFDEGL) are Cytoplasmic-facing. A helical membrane pass occupies residues 196 to 216 (ALAHFVWIAPLQVMLLMGLLW). The Extracellular segment spans residues 217–222 (ELLQAS). Residues 223–243 (AFCGLAFLIVLALLQAGLGRM) form a helical membrane-spanning segment. The Cytoplasmic segment spans residues 244–298 (MMKYRDQRAGKINERLVITSEMIENIQSVKAYCWEEAMEKMIENLRQTELRLTRK). A helical membrane pass occupies residues 299-319 (AAYVRYVNSSAFFFSGFFVVF). At 320 to 339 (LSVLPYALIKGIILRKIFTT) the chain is on the extracellular side. The helical transmembrane segment at 340–358 (ISFCIVLRMAVTRQFPWAV) threads the bilayer. Topologically, residues 359 to 859 (QTWYDSLGAI…YLRYITVHKN (501 aa)) are cytoplasmic. Residues W401, 458 to 465 (GSTGAGKT), and Q493 contribute to the ATP site. The ABC transporter 1 domain occupies 423–646 (SGDNRLFFSN…RPDFSSKLMG (224 aa)). C524 carries the S-palmitoyl cysteine lipid modification. A phosphoserine mark is found at S549 and S660. The segment at 654-832 (SAERRNSILT…EEINEEDLKE (179 aa)) is disordered R region. At S670 the chain carries Phosphoserine; by PKA. Phosphoserine is present on S686. A Glycyl lysine isopeptide (Lys-Gly) (interchain with G-Cter in ubiquitin) cross-link involves residue K688. Phosphoserine occurs at positions 700 and 712. T717 is modified (phosphothreonine). 5 positions are modified to phosphoserine: S737, S768, S791, S796, and S814. A helical transmembrane segment spans residues 860-880 (LIFVLIWCLVIFLAEVAASLV). The 297-residue stretch at 860 to 1156 (LIFVLIWCLV…AVNSSIDVDS (297 aa)) folds into the ABC transmembrane type-1 2 domain. Residues 881-919 (AFWLIEKTRPQDKGNSTRSTNNTSPVIITSTSAFYMFYI) lie on the Extracellular side of the membrane. N-linked (GlcNAc...) asparagine glycosylation is found at N895 and N901. Residues 920 to 940 (YVGVADSLLALGFLRGLPLVH) traverse the membrane as a discontinuously helical segment. Over 941–991 (TLITVSKILHQKMLHSVLHAPMSTLNTLKAGAILNRFSKDIAILDDLLPLT) the chain is Cytoplasmic. The helical transmembrane segment at 992–1012 (IFDFIQLVLIVIGAVVVVSIL) threads the bilayer. Residues 1013 to 1014 (KP) are Extracellular-facing. A helical membrane pass occupies residues 1015–1035 (YIFLAAVPVIIAFVILRAYFL). At 1036–1096 (QTSQQLKQLE…TATWFLYLST (61 aa)) the chain is on the cytoplasmic side. Residues 1097-1117 (LRWFQMRIEMIFVVFFVAVTF) form a helical membrane-spanning segment. At 1118-1131 (ISILTTGEGEGTVG) the chain is on the extracellular side. Residues 1132-1152 (IILTLAMNIMSTLQWAVNSSI) form a helical membrane-spanning segment. The Cytoplasmic portion of the chain corresponds to 1153 to 1482 (DVDSLMRSVS…AEEEVQDTRL (330 aa)). One can recognise an ABC transporter 2 domain in the interval 1212 to 1445 (ITVKDLTAKY…KSLFQQAISP (234 aa)). Residues Y1221 and 1246-1253 (GRTGSGKS) each bind ATP. Residues 1388 to 1482 (RALKQAFADC…AEEEVQDTRL (95 aa)) form an interaction with GORASP2 region. C1397 carries the S-palmitoyl cysteine lipid modification. Residues S1446 and S1458 each carry the phosphoserine modification. The interval 1454-1482 (QRSSSKHRSRAQITALKEEAEEEVQDTRL) is disordered. Over residues 1472–1482 (EAEEEVQDTRL) the composition is skewed to acidic residues. The PDZ-binding motif lies at 1480 to 1482 (TRL).

It belongs to the ABC transporter superfamily. ABCC family. CFTR transporter (TC 3.A.1.202) subfamily. Monomer; does not require oligomerization for channel activity. May form oligomers in the membrane. Interacts with SLC26A3, SLC26A6 and NHERF1. Interacts with SHANK2. Interacts with MYO6. Interacts (via C-terminus) with GOPC (via PDZ domain); this promotes CFTR internalization and thereby decreases channel activity. Interacts with SLC4A7 through NHERF1. Found in a complex with MYO5B and RAB11A. Interacts with ANO1. Interacts with SLC26A8. Interacts with AHCYL1; the interaction increases CFTR activity. Interacts with CSE1L. The core-glycosylated form interacts with GORASP2 (via PDZ GRASP-type 1 domain) in respone to ER stress. Interacts with MARCHF2; the interaction leads to CFTR ubiqtuitination and degradation. Interacts with ADGRG2. N-glycosylated. Post-translationally, phosphorylated; cAMP treatment promotes phosphorylation and activates the channel. Dephosphorylation decreases the ATPase activity (in vitro). Phosphorylation at PKA sites activates the channel. Phosphorylation at PKC sites enhances the response to phosphorylation by PKA. Phosphorylated by AMPK; this inhibits channel activity. In terms of processing, ubiquitinated, leading to its degradation in the lysosome. Deubiquitination by USP10 in early endosomes enhances its endocytic recycling to the cell membrane. Ubiquitinated by RNF185 during ER stress. Ubiquitinated by MARCHF2.

The protein localises to the apical cell membrane. The protein resides in the early endosome membrane. Its subcellular location is the cell membrane. It is found in the recycling endosome membrane. It localises to the endoplasmic reticulum membrane. The protein localises to the nucleus. The catalysed reaction is ATP + H2O + closed Cl(-) channel = ADP + phosphate + open Cl(-) channel.. It carries out the reaction chloride(in) = chloride(out). The enzyme catalyses hydrogencarbonate(in) = hydrogencarbonate(out). It catalyses the reaction ATP + H2O = ADP + phosphate + H(+). Its function is as follows. Epithelial ion channel that plays an important role in the regulation of epithelial ion and water transport and fluid homeostasis. Mediates the transport of chloride ions across the cell membrane. Possesses an intrinsic ATPase activity and utilizes ATP to gate its channel; the passive flow of anions through the channel is gated by cycles of ATP binding and hydrolysis by the ATP-binding domains. The ion channel is also permeable to HCO(3)(-); selectivity depends on the extracellular chloride concentration. Exerts its function also by modulating the activity of other ion channels and transporters. Contributes to the regulation of the pH and the ion content of the epithelial fluid layer. Modulates the activity of the epithelial sodium channel (ENaC) complex, in part by regulating the cell surface expression of the ENaC complex. May regulate bicarbonate secretion and salvage in epithelial cells by regulating the transporter SLC4A7. Can inhibit the chloride channel activity of ANO1. Plays a role in the chloride and bicarbonate homeostasis during sperm epididymal maturation and capacitation. In Rhinolophus ferrumequinum (Greater horseshoe bat), this protein is Cystic fibrosis transmembrane conductance regulator.